The chain runs to 71 residues: uncharacterized protein (71 aa).

Residues 1 to 16 (MLLLYTVMILTCIIYK) are Cytoplasmic-facing. A helical transmembrane segment spans residues 17–38 (LVPDNKYWPIHMFFFIMIYIVY). The Extracellular segment spans residues 39 to 69 (MYEKLDIHEKSQFWNYTMARLSGHPVPTIIC). An N-linked (GlcNAc...) asparagine; by host glycan is attached at N53.

The protein belongs to the asfivirus X69R family.

The protein localises to the host membrane. This is an uncharacterized protein from African swine fever virus (isolate Pig/Kenya/KEN-50/1950) (ASFV).